Reading from the N-terminus, the 383-residue chain is Probable purine permease 16 (383 aa).

Helical transmembrane passes span 30–50, 72–92, 113–133, 138–158, 166–186, 203–223, 247–267, 297–317, 322–342, and 346–363; these read ISVF…MLLL, WTQA…FFIL, VLSL…LYAL, VGWG…SAFI, WIII…PAFA, LILI…QLGF, ICVS…SGEF, VWAV…ADVV, SPVV…EFGW, and GALL…YSLH.

This sequence belongs to the purine permeases (TC 2.A.7.14) family.

Its subcellular location is the membrane. In Arabidopsis thaliana (Mouse-ear cress), this protein is Probable purine permease 16 (PUP16).